The sequence spans 518 residues: MFSNFYVQQRIKKMELMRQEGFNPYANKTTRTISNYNFLNKYNHLKMQSSDDTQDCTQNKEIESIVGRVRFIRLMGKACFIKIQDESGILQAYVSKNDIGEDFLLIKKVLEVGDIINVSGYAFVTKTGELSIHTLTLQILTKSIVPLPEKFHGLNDIELRYRQRYVDLIVNNKVKETFKLRSQIVSCIRQFFEQKGFLEVETPMLHSIPGGANARPFITHHNALDVDRYLRIAPELYLKRLIVGGFEAIFELNRNFRNEGMDHSHNPEFSMIEFYWAYKTYEDLITLTQELFAFLFKKLNLPHSLIHDELEIDFSQWHIIGYKEALIKIGGLDKNIIDNQDALLSFLMSKHLKVDKSMSYGKLLGEAFDEFVEHKLINPTFITQYPIEISPLARRNDENPNVADRFELFIGGKEIANGFSELNDPIDQFERFKEQAKAKDAGDEEAQYMDEDYVWALAHGMPPTAGEGIGIDRLVMLLSNAKTIKDVILFPALKPTKSNFDIILSQDALSNAQIIKEN.

Mg(2+) is bound by residues Glu-407 and Glu-414.

The protein belongs to the class-II aminoacyl-tRNA synthetase family. In terms of assembly, homodimer. It depends on Mg(2+) as a cofactor.

The protein resides in the cytoplasm. It carries out the reaction tRNA(Lys) + L-lysine + ATP = L-lysyl-tRNA(Lys) + AMP + diphosphate. The polypeptide is Lysine--tRNA ligase (Helicobacter hepaticus (strain ATCC 51449 / 3B1)).